The sequence spans 512 residues: Endo-1,4-beta-xylanase A (512 aa).

The signal sequence occupies residues 1 to 30; it reads MKRKVKKMAAMATSIIMAIMIILHSIPVLA. The region spanning 33 to 228 is the GH11 domain; it reads IIYDNETGTH…SSGYANVYKN (196 aa). Catalysis depends on E124, which acts as the Nucleophile. The active-site Proton donor is E215. CBM6 domains lie at 251 to 371 and 388 to 508; these read SIIE…FIFS and SIIQ…FVFS. Ca(2+)-binding residues include E254 and E256. Residue T271 coordinates D-xylotriose. R276 contacts Ca(2+). Residues 279 to 340 form repeat 1; that stretch reads GYIENGNTVT…SSTGSWNTYQ (62 aa). Residues 279–477 form a 2 X 61 AA approximate repeats region; it reads GYIENGNTVT…GSTGSFDTYR (199 aa). Residues Y280, N337, and N364 each coordinate D-xylotriose. D-xylobiose is bound by residues Y280, N337, and N364. The Ca(2+) site is built by D366, Q391, E393, and S413. Copy 2 of the repeat occupies 416–477; it reads GYIENGYSTT…GSTGSFDTYR (62 aa). 3 residues coordinate D-xylotriose: Y417, D474, and N501. D503 lines the Ca(2+) pocket.

It belongs to the glycosyl hydrolase 11 (cellulase G) family.

The enzyme catalyses Endohydrolysis of (1-&gt;4)-beta-D-xylosidic linkages in xylans.. It functions in the pathway glycan degradation; xylan degradation. This is Endo-1,4-beta-xylanase A (xynA) from Thermoclostridium stercorarium (Clostridium stercorarium).